Consider the following 81-residue polypeptide: MAIKERVGLVVSDKMQKTVVVAIENRAPHPKYGKIVVKTRRYKAHDEDNKCKVGDRVRIQETRPLSKTKRWQVAEILNTKA.

The protein belongs to the universal ribosomal protein uS17 family. As to quaternary structure, part of the 30S ribosomal subunit.

One of the primary rRNA binding proteins, it binds specifically to the 5'-end of 16S ribosomal RNA. This is Small ribosomal subunit protein uS17 from Trichormus variabilis (strain ATCC 29413 / PCC 7937) (Anabaena variabilis).